The primary structure comprises 122 residues: Large ribosomal subunit protein uL14 (122 aa).

The protein belongs to the universal ribosomal protein uL14 family. Part of the 50S ribosomal subunit. Forms a cluster with proteins L3 and L19. In the 70S ribosome, L14 and L19 interact and together make contacts with the 16S rRNA in bridges B5 and B8.

Functionally, binds to 23S rRNA. Forms part of two intersubunit bridges in the 70S ribosome. This chain is Large ribosomal subunit protein uL14, found in Solibacter usitatus (strain Ellin6076).